The following is a 544-amino-acid chain: DNA mismatch repair protein MutL (544 aa).

Belongs to the DNA mismatch repair MutL/HexB family.

This protein is involved in the repair of mismatches in DNA. It is required for dam-dependent methyl-directed DNA mismatch repair. May act as a 'molecular matchmaker', a protein that promotes the formation of a stable complex between two or more DNA-binding proteins in an ATP-dependent manner without itself being part of a final effector complex. This chain is DNA mismatch repair protein MutL, found in Thermodesulfovibrio yellowstonii (strain ATCC 51303 / DSM 11347 / YP87).